We begin with the raw amino-acid sequence, 94 residues long: Integration host factor subunit beta (94 aa).

Belongs to the bacterial histone-like protein family. As to quaternary structure, heterodimer of an alpha and a beta chain.

Functionally, this protein is one of the two subunits of integration host factor, a specific DNA-binding protein that functions in genetic recombination as well as in transcriptional and translational control. The polypeptide is Integration host factor subunit beta (Mannheimia succiniciproducens (strain KCTC 0769BP / MBEL55E)).